Here is a 188-residue protein sequence, read N- to C-terminus: Putative manganese efflux pump MntP (188 aa).

6 helical membrane-spanning segments follow: residues 3 to 23 (LFSL…VSIC), 39 to 59 (AGLY…LLGV), 65 to 85 (ITDY…VNML), 110 to 130 (LGFA…FLSV), 131 to 151 (DIYS…IIGV), and 167 to 187 (ILGG…HTLF).

The protein belongs to the MntP (TC 9.B.29) family.

It is found in the cell inner membrane. Its function is as follows. Probably functions as a manganese efflux pump. The polypeptide is Putative manganese efflux pump MntP (Mannheimia succiniciproducens (strain KCTC 0769BP / MBEL55E)).